Reading from the N-terminus, the 501-residue chain is NAD(P)H-quinone oxidoreductase subunit 2, chloroplastic (501 aa).

The next 14 membrane-spanning stretches (helical) occupy residues 15 to 35, 42 to 62, 82 to 102, 107 to 127, 132 to 152, 167 to 187, 210 to 230, 244 to 264, 278 to 298, 307 to 327, 334 to 354, 378 to 398, 410 to 430, and 466 to 486; these read ILPE…DLIL, VFFF…IFQL, IFRI…IDFI, LAIT…MFLC, LITI…LSGY, LLIG…LYGL, FGSL…LSLV, PTPV…ALLV, WHSL…LVAI, LAYS…TGNF, IVYL…IILF, FSLA…GFFG, GLYF…YYYL, and VSII…NPII.

The protein belongs to the complex I subunit 2 family. As to quaternary structure, NDH is composed of at least 16 different subunits, 5 of which are encoded in the nucleus.

The protein localises to the plastid. It is found in the chloroplast thylakoid membrane. It carries out the reaction a plastoquinone + NADH + (n+1) H(+)(in) = a plastoquinol + NAD(+) + n H(+)(out). It catalyses the reaction a plastoquinone + NADPH + (n+1) H(+)(in) = a plastoquinol + NADP(+) + n H(+)(out). NDH shuttles electrons from NAD(P)H:plastoquinone, via FMN and iron-sulfur (Fe-S) centers, to quinones in the photosynthetic chain and possibly in a chloroplast respiratory chain. The immediate electron acceptor for the enzyme in this species is believed to be plastoquinone. Couples the redox reaction to proton translocation, and thus conserves the redox energy in a proton gradient. The chain is NAD(P)H-quinone oxidoreductase subunit 2, chloroplastic from Physcomitrium patens (Spreading-leaved earth moss).